Here is a 334-residue protein sequence, read N- to C-terminus: Biotin synthase (334 aa).

The Radical SAM core domain maps to 48–275 (NQVQTSQLLS…RSMVRLSAGR (228 aa)). [4Fe-4S] cluster contacts are provided by Cys63, Cys67, and Cys70. Cys107, Cys138, Cys198, and Arg270 together coordinate [2Fe-2S] cluster.

The protein belongs to the radical SAM superfamily. Biotin synthase family. As to quaternary structure, homodimer. Requires [4Fe-4S] cluster as cofactor. [2Fe-2S] cluster is required as a cofactor.

The enzyme catalyses (4R,5S)-dethiobiotin + (sulfur carrier)-SH + 2 reduced [2Fe-2S]-[ferredoxin] + 2 S-adenosyl-L-methionine = (sulfur carrier)-H + biotin + 2 5'-deoxyadenosine + 2 L-methionine + 2 oxidized [2Fe-2S]-[ferredoxin]. Its pathway is cofactor biosynthesis; biotin biosynthesis; biotin from 7,8-diaminononanoate: step 2/2. Catalyzes the conversion of dethiobiotin (DTB) to biotin by the insertion of a sulfur atom into dethiobiotin via a radical-based mechanism. In Maricaulis maris (strain MCS10) (Caulobacter maris), this protein is Biotin synthase.